Here is a 493-residue protein sequence, read N- to C-terminus: Transmembrane protein 145 (493 aa).

A helical transmembrane segment spans residues 9-29 (LRRLLPPLLLLLLSLPPRARA). The N-linked (GlcNAc...) asparagine glycan is linked to N35. Transmembrane regions (helical) follow at residues 175-195 (VTFLLIFILIFFLSCYFGYLL), 207-227 (MFMAAAGVEVLSLLFFCIYWG), 241-261 (ILAKLLFSSSFLIFLLMLILL), 282-302 (VYMTLYTLTHVVLLIYEAEFF), 318-338 (GLIGLQVAAYVWFCYAVLVSL), 349-369 (VPFFAAYTLWFFAVPVMALIA), and 381-401 (IVNGIQLGIHLYAHGVFLIMT). N444 is a glycosylation site (N-linked (GlcNAc...) asparagine). Residues 464–493 (PATSPLPRAAPDSGLPLFRDLRPPGPLRDL) are disordered.

The protein resides in the membrane. This is Transmembrane protein 145 (TMEM145) from Homo sapiens (Human).